The following is a 70-amino-acid chain: MGFLITTLIFVVVGIIASLCVRICCNRGPSTNLLHLTLVITATVCCWMMWAIVYIAQMNPLIVPILSETE.

Helical transmembrane passes span 1-21 and 36-56; these read MGFLITTLIFVVVGIIASLCV and LTLVITATVCCWMMWAIVYIA.

The protein belongs to the V-ATPase e1/e2 subunit family. In terms of assembly, V-ATPase is a heteromultimeric enzyme composed of a peripheral catalytic V1 complex (components A to H) attached to an integral membrane V0 proton pore complex (components: a, c, c'', d and e).

It localises to the golgi apparatus. The protein localises to the trans-Golgi network membrane. Its function is as follows. Subunit of the integral membrane V0 complex of vacuolar ATPase. V-ATPase is responsible for acidifying a variety of intracellular compartments in eukaryotic cells. The polypeptide is V-type proton ATPase subunit e1 (VHA-e1) (Arabidopsis thaliana (Mouse-ear cress)).